Reading from the N-terminus, the 162-residue chain is Protein lon-8 (162 aa).

The N-terminal stretch at 1–23 is a signal peptide; sequence MRNSRFCAILAVISAISVSYVLA.

The protein resides in the secreted. Its function is as follows. Secreted protein that is involved in larval elongation, early adult growth and male tail development. This is Protein lon-8 from Caenorhabditis elegans.